The chain runs to 632 residues: uncharacterized protein (632 aa).

The next 4 helical transmembrane spans lie at 255-275 (LFYA…ELRV), 506-526 (IALL…LTSI), 566-586 (MIFA…SMVF), and 603-623 (IVVI…AVLF).

The protein localises to the cell membrane. This is an uncharacterized protein from Mycoplasma pneumoniae (strain ATCC 29342 / M129 / Subtype 1) (Mycoplasmoides pneumoniae).